Here is a 192-residue protein sequence, read N- to C-terminus: Thiol-disulfide oxidoreductase ResA (192 aa).

Residues 22–41 form a helical; Signal-anchor for type II membrane protein membrane-spanning segment; it reads SSILLILVAAVVFAIVSNMK. The Thioredoxin domain occupies 47–189; it reads YRVGDAAPDF…LEGYLNDIAP (143 aa). Cysteines 89 and 92 form a disulfide.

This sequence belongs to the thioredoxin family. ResA subfamily.

It is found in the cell membrane. The protein operates within protein modification; cytochrome c assembly. Thiol-disulfide oxidoreductase which is required in disulfide reduction during c-type cytochrome synthesis. May accept reducing equivalents from CcdA, leading to breakage of disulfide bonds in apocytochrome c; following this reduction heme can be covalently attached. This Oceanobacillus iheyensis (strain DSM 14371 / CIP 107618 / JCM 11309 / KCTC 3954 / HTE831) protein is Thiol-disulfide oxidoreductase ResA.